A 163-amino-acid polypeptide reads, in one-letter code: Epithelial membrane protein 3 (163 aa).

The chain crosses the membrane as a helical span at residues 4–24 (LLLVVSALHILILVLLFVATL). N-linked (GlcNAc...) asparagine glycosylation is found at Asn46 and Asn56. A run of 3 helical transmembrane segments spans residues 66 to 86 (VQAL…LFMI), 100 to 120 (TGLC…IYAI), and 139 to 159 (FALA…YIHL).

Belongs to the PMP-22/EMP/MP20 family.

The protein resides in the membrane. Probably involved in cell proliferation and cell-cell interactions. In Rattus norvegicus (Rat), this protein is Epithelial membrane protein 3 (Emp3).